Here is a 160-residue protein sequence, read N- to C-terminus: Cyanate hydratase (160 aa).

Catalysis depends on residues Arg-100, Glu-103, and Ser-126.

This sequence belongs to the cyanase family.

The catalysed reaction is cyanate + hydrogencarbonate + 3 H(+) = NH4(+) + 2 CO2. Its function is as follows. Catalyzes the reaction of cyanate with bicarbonate to produce ammonia and carbon dioxide. The protein is Cyanate hydratase of Emericella nidulans (strain FGSC A4 / ATCC 38163 / CBS 112.46 / NRRL 194 / M139) (Aspergillus nidulans).